A 409-amino-acid polypeptide reads, in one-letter code: Peptidase T (409 aa).

Histidine 80 lines the Zn(2+) pocket. Residue aspartate 82 is part of the active site. Aspartate 143 is a Zn(2+) binding site. Catalysis depends on glutamate 177, which acts as the Proton acceptor. Zn(2+)-binding residues include glutamate 178, aspartate 200, and histidine 382.

It belongs to the peptidase M20B family. Zn(2+) is required as a cofactor.

It is found in the cytoplasm. It catalyses the reaction Release of the N-terminal residue from a tripeptide.. Cleaves the N-terminal amino acid of tripeptides. The sequence is that of Peptidase T from Alkaliphilus oremlandii (strain OhILAs) (Clostridium oremlandii (strain OhILAs)).